Consider the following 584-residue polypeptide: 2-succinyl-5-enolpyruvyl-6-hydroxy-3-cyclohexene-1-carboxylate synthase (584 aa).

The protein belongs to the TPP enzyme family. MenD subfamily. In terms of assembly, homodimer. Mg(2+) is required as a cofactor. The cofactor is Mn(2+). Requires thiamine diphosphate as cofactor.

The enzyme catalyses isochorismate + 2-oxoglutarate + H(+) = 5-enolpyruvoyl-6-hydroxy-2-succinyl-cyclohex-3-ene-1-carboxylate + CO2. Its pathway is quinol/quinone metabolism; 1,4-dihydroxy-2-naphthoate biosynthesis; 1,4-dihydroxy-2-naphthoate from chorismate: step 2/7. The protein operates within quinol/quinone metabolism; menaquinone biosynthesis. Catalyzes the thiamine diphosphate-dependent decarboxylation of 2-oxoglutarate and the subsequent addition of the resulting succinic semialdehyde-thiamine pyrophosphate anion to isochorismate to yield 2-succinyl-5-enolpyruvyl-6-hydroxy-3-cyclohexene-1-carboxylate (SEPHCHC). In Bacillus cereus (strain ATCC 14579 / DSM 31 / CCUG 7414 / JCM 2152 / NBRC 15305 / NCIMB 9373 / NCTC 2599 / NRRL B-3711), this protein is 2-succinyl-5-enolpyruvyl-6-hydroxy-3-cyclohexene-1-carboxylate synthase.